A 217-amino-acid chain; its full sequence is N-(5'-phosphoribosyl)anthranilate isomerase (217 aa).

It belongs to the TrpF family.

It catalyses the reaction N-(5-phospho-beta-D-ribosyl)anthranilate = 1-(2-carboxyphenylamino)-1-deoxy-D-ribulose 5-phosphate. It participates in amino-acid biosynthesis; L-tryptophan biosynthesis; L-tryptophan from chorismate: step 3/5. This is N-(5'-phosphoribosyl)anthranilate isomerase from Acaryochloris marina (strain MBIC 11017).